A 245-amino-acid polypeptide reads, in one-letter code: Transcriptional regulatory protein YpdB (245 aa).

Positions 2 to 116 (KVIIVEDEFL…RITGMLQKLE (115 aa)) constitute a Response regulatory domain. Position 53 is a 4-aspartylphosphate (D53). The 106-residue stretch at 140–245 (INLVKDERII…VKEFRQLMHL (106 aa)) folds into the HTH LytTR-type domain.

In terms of processing, phosphorylated by YpdA.

It localises to the cytoplasm. In terms of biological role, member of the two-component regulatory system YpdA/YpdB. YpdB regulates expression of yhjX by binding to its promoter region. This Escherichia coli O6:H1 (strain CFT073 / ATCC 700928 / UPEC) protein is Transcriptional regulatory protein YpdB (ypdB).